Here is a 165-residue protein sequence, read N- to C-terminus: Large ribosomal subunit protein uL10 (165 aa).

This sequence belongs to the universal ribosomal protein uL10 family. Part of the ribosomal stalk of the 50S ribosomal subunit. The N-terminus interacts with L11 and the large rRNA to form the base of the stalk. The C-terminus forms an elongated spine to which L12 dimers bind in a sequential fashion forming a multimeric L10(L12)X complex.

Its function is as follows. Forms part of the ribosomal stalk, playing a central role in the interaction of the ribosome with GTP-bound translation factors. This is Large ribosomal subunit protein uL10 from Shewanella halifaxensis (strain HAW-EB4).